A 532-amino-acid chain; its full sequence is MSKAWGGIGIGAWADEAERADEEQAAEATAATADTQSFPSLREAAAATATSGKSRKMKKMSLSEFTTGAYTAPGGRNSVGLTQQEILQLPTGPRQRSEEEMQPGRLGGGFSSYGGRSGGRIGRDRDDSDGSWSGGGGGGGRRPYGGGFDDDRRGNQSRVSDFPQPSRADEVDDWGKEKKPLPSFDQGRQGRYSGDGGGFGGGGSGFGGGGGGGGGGLSRADDVDNWGAGKRQAPVRSSTFGSSFGDSGQEERRRLVLEPRKVESGGSETPPVVEKTSKPNPFGAARPREDVLAEKGLDWKKIDSEIEAKKGSSQTSRPTSAHSSRPSSAQSNRSESSGLNNVVKPRPKVNPFGDAKPREVLLEEQGKDWRKMDLELEHRRVDRPETEEEKMLKEEIEELRKKLEKESVAPEIKESDQEPGSNNNHNDLPEIIRGKEKDLEILTRELDDKVRFRQKPVERPGSGAGRTGTYSERTHSRAGSIDETRSFESTERPRSRGAVDAWVRPANEQRRNFQGTKERGFFSNRSSSREGW.

3 disordered regions span residues 16-365, 401-434, and 451-532; these read EAER…LEEQ, KKLE…IIRG, and RFRQ…REGW. Positions 26 to 35 are enriched in low complexity; the sequence is AEATAATADT. 2 stretches are compositionally biased toward gly residues: residues 105–120 and 132–147; these read RLGG…SGGR and WSGG…YGGG. Over residues 167–180 the composition is skewed to basic and acidic residues; the sequence is RADEVDDWGKEKKP. A Nuclear localization signal 1 motif is present at residues 177-184; that stretch reads EKKPLPSF. Over residues 193-217 the composition is skewed to gly residues; sequence SGDGGGFGGGGSGFGGGGGGGGGGL. The short motif at 237–244 is the Nuclear localization signal 2 element; it reads SSTFGSSF. Low complexity predominate over residues 237-247; that stretch reads SSTFGSSFGDS. 2 stretches are compositionally biased toward basic and acidic residues: residues 249–263 and 286–310; these read QEER…RKVE and RPRE…EAKK. Residues 315-337 are compositionally biased toward low complexity; that stretch reads TSRPTSAHSSRPSSAQSNRSESS. Composition is skewed to basic and acidic residues over residues 355–365, 401–416, 472–494, and 507–520; these read AKPREVLLEEQ, KKLE…KESD, ERTH…ERPR, and NEQR…KERG.

The protein belongs to the eIF-4 subunit B family. As to quaternary structure, homodimer. Nonspherical monomer. mRNA-discriminating component of initiation complexes. Phosphorylated.

It localises to the nucleus. Functionally, promotes the eIF4F and eIF4A RNA-dependent ATP-hydrolysis activity with different efficiency depending on mRNAs, thus providing mRNA discrimination during initiation of translation. The sequence is that of Eukaryotic translation initiation factor 4B1 from Arabidopsis thaliana (Mouse-ear cress).